The chain runs to 517 residues: Protein AGENET DOMAIN (AGD)-CONTAINING P1 (517 aa).

The segment at 1-35 (MLRPRRSLGVSSPAKQRKKAAPKNSMATRANRKRL) is disordered. Plant Agenet, chromatin-binding stretches follow at residues 37–111 (SYLK…PPMS) and 117–173 (KKIV…EWVD). The disordered stretch occupies residues 177-202 (KPPLEETEEEEDESEEDKLDDSEDEE). Residues 181-202 (EETEEEEDESEEDKLDDSEDEE) are compositionally biased toward acidic residues. Plant Agenet, chromatin-binding regions lie at residues 219 to 287 (QMFS…PRDE), 289 to 345 (IDFA…DWVD), 378 to 446 (QAFS…LESV), and 449 to 505 (SPFE…EWID).

Expressed ubiquitously during vegetative stage, in meristems (e.g. root tips and shoot apical meristem), and in ovules and young seeds during reproductive stage.

The protein localises to the nucleus. Its function is as follows. Heterochromatin-binding protein that preferentially occupies long transposons and specifically recognizes the histone H3 'Lys-9' methylation (H3K9me) marks, with a stronger affinity for dimethylated H3K9 (H3K9me2). Required for transcriptional silencing, non-CG DNA methylation (e.g. CHG and CHH regions), and H3K9 dimethylation (H3K9me2) at some loci. Mediates heterochromatin phase separation and chromocenter formation. In Arabidopsis thaliana (Mouse-ear cress), this protein is Protein AGENET DOMAIN (AGD)-CONTAINING P1.